The chain runs to 324 residues: MKPSIILYKTLPDDLLHRLEAHFTVTQVPNLHPETVARHAQAFASAQGLLGASETVNRALLEKMPALRAASTISVGYDNVEVDALTARKIVLMHTPAVLTETVADTVMALMLATARRVVDVAERVKAGEWTESIGPAWFGVDVHHKTLGIVGMGRIGMALAQRAHFGFTMPVLYHARRRHQEAEDRFNARYCDLDTLLQEADFVCVILPLTAETRHLFGATQFARMKSSAIFINAGRGPVADENALIAALQNGEIYAAGLDVFEQEPLSVDSPLLNMSNVVAVPHIGSATHETRYNMMACAVDNLIDALQGKIEKNCVNPQAAG.

Catalysis depends on residues R237 and E266. Catalysis depends on H285, which acts as the Proton donor.

Belongs to the D-isomer specific 2-hydroxyacid dehydrogenase family. GhrB subfamily. As to quaternary structure, homodimer.

The protein localises to the cytoplasm. The enzyme catalyses glycolate + NADP(+) = glyoxylate + NADPH + H(+). It carries out the reaction (R)-glycerate + NAD(+) = 3-hydroxypyruvate + NADH + H(+). The catalysed reaction is (R)-glycerate + NADP(+) = 3-hydroxypyruvate + NADPH + H(+). Functionally, catalyzes the NADPH-dependent reduction of glyoxylate and hydroxypyruvate into glycolate and glycerate, respectively. This is Glyoxylate/hydroxypyruvate reductase B from Salmonella gallinarum (strain 287/91 / NCTC 13346).